We begin with the raw amino-acid sequence, 140 residues long: Putative pre-16S rRNA nuclease (140 aa).

It belongs to the YqgF nuclease family.

The protein resides in the cytoplasm. In terms of biological role, could be a nuclease involved in processing of the 5'-end of pre-16S rRNA. The protein is Putative pre-16S rRNA nuclease of Chlorobium chlorochromatii (strain CaD3).